The chain runs to 722 residues: Polyribonucleotide nucleotidyltransferase (722 aa).

Positions 498 and 504 each coordinate Mg(2+). The region spanning 565-624 (PQFHTMKIDPDKIRDIIGKGGATIRSITEETGASIDIDDNGTIKIYADDGDGMQAAIARI) is the KH domain. The S1 motif domain occupies 634–702 (GAVYQGKVVR…QRGRIKLSIK (69 aa)).

Belongs to the polyribonucleotide nucleotidyltransferase family. Component of the RNA degradosome, which is a multiprotein complex involved in RNA processing and mRNA degradation. Mg(2+) serves as cofactor.

The protein resides in the cytoplasm. The catalysed reaction is RNA(n+1) + phosphate = RNA(n) + a ribonucleoside 5'-diphosphate. In terms of biological role, involved in mRNA degradation. Catalyzes the phosphorolysis of single-stranded polyribonucleotides processively in the 3'- to 5'-direction. In Saccharophagus degradans (strain 2-40 / ATCC 43961 / DSM 17024), this protein is Polyribonucleotide nucleotidyltransferase.